Reading from the N-terminus, the 253-residue chain is MTFQQHTPALRTGGFTFKQFFVAHDRCAMKVGTDGVLLGAWVPLREETRILDIGCGSGLLGLMLAQRSGGRFPIDGVELDAAASTQAADNAAASPWADCIRIYPADIVGYAQTATRRYSLIVSNPPYFSPGVDCASAQRAQARYTTTLTHDALLDCAGRLLEPDGRFCVVLPAVSAEDFLALAQRSAWRADIRVDVADSASRPVNRVLLSLRRGGESEINAIALSRTSLIIRDDDRRYSSSFQALTRDFYLSM.

This sequence belongs to the methyltransferase superfamily. tRNA (adenine-N(6)-)-methyltransferase family.

Its subcellular location is the cytoplasm. It catalyses the reaction adenosine(37) in tRNA1(Val) + S-adenosyl-L-methionine = N(6)-methyladenosine(37) in tRNA1(Val) + S-adenosyl-L-homocysteine + H(+). Functionally, specifically methylates the adenine in position 37 of tRNA(1)(Val) (anticodon cmo5UAC). The sequence is that of tRNA1(Val) (adenine(37)-N6)-methyltransferase from Dickeya chrysanthemi (strain Ech1591) (Dickeya zeae (strain Ech1591)).